The sequence spans 51 residues: Insulin (51 aa).

Cystine bridges form between cysteine 7–cysteine 37, cysteine 19–cysteine 50, and cysteine 36–cysteine 41.

The protein belongs to the insulin family. As to quaternary structure, heterodimer of a B chain and an A chain linked by two disulfide bonds.

The protein localises to the secreted. In terms of biological role, insulin decreases blood glucose concentration. It increases cell permeability to monosaccharides, amino acids and fatty acids. It accelerates glycolysis, the pentose phosphate cycle, and glycogen synthesis in liver. The protein is Insulin (INS) of Ptyas dhumnades (Big-eyed ratsnake).